A 471-amino-acid chain; its full sequence is Mixed lineage kinase domain-like protein (471 aa).

Residues 1-149 are N-terminal bundle and brace (NBB); mediates INSP6 binding; the sequence is MENLKHIITL…DADEDRRAFQ (149 aa). Positions 55–84 form a coiled coil; that stretch reads SEKLTTAMNRFKAALEEANGEIEKFSNRSN. Ser-125 is subject to Phosphoserine. A coiled-coil region spans residues 139–180; sequence QDADEDRRAFQMLRRDNEKIEASLRRLEINMKEIKETLRQYL. A Protein kinase domain is found at 194-469; sequence KEIKKEQLSG…DEILKKLSTF (276 aa). Residues 209 to 217 and Lys-230 contribute to the ATP site; that span reads LRENEVSTL. Thr-357 is subject to Phosphothreonine; by RIPK3. Residues Ser-358 and Ser-360 each carry the phosphoserine; by RIPK3 modification.

Belongs to the protein kinase superfamily. As to quaternary structure, homooligomer. Homotrimer; forms homotrimers on necroptosis induction. Upon TNF-induced necrosis, forms in complex with PGAM5, RIPK1 and RIPK3. Within this complex, may play a role in the proper targeting of RIPK1-RIPK3 to its downstream effector PGAM5. Interacts with RIPK3; the interaction is direct and promotes its phosphorylation and subsequent activation. Post-translationally, phosphorylation by RIPK3 induces a conformational switch that is required for necroptosis. It also induces homotrimerization and localization to the plasma membrane.

The protein localises to the cytoplasm. It is found in the cell membrane. Its subcellular location is the nucleus. With respect to regulation, activated via binding to highly phosphorylated inositol phosphates such as inositolhexakisphosphate (InsP6) which mediates the release of an N-terminal auto-inhibitory region. Activation requires not only RIPK3-dependent phosphorylation but also binding to highly phosphorylated inositol phosphates. Inhibited by necrosulfonamide, a specific inhibitor of necroptosis that targets Cys-86. Pseudokinase that plays a key role in TNF-induced necroptosis, a programmed cell death process. Does not have protein kinase activity. Activated following phosphorylation by RIPK3, leading to homotrimerization, localization to the plasma membrane and execution of programmed necrosis characterized by calcium influx and plasma membrane damage. In addition to TNF-induced necroptosis, necroptosis can also take place in the nucleus in response to orthomyxoviruses infection: following activation by ZBP1, MLKL is phosphorylated by RIPK3 in the nucleus, triggering disruption of the nuclear envelope and leakage of cellular DNA into the cytosol.following ZBP1 activation, which senses double-stranded Z-RNA structures, nuclear RIPK3 catalyzes phosphorylation and activation of MLKL, promoting disruption of the nuclear envelope and leakage of cellular DNA into the cytosol. Binds to highly phosphorylated inositol phosphates such as inositolhexakisphosphate (InsP6) which is essential for its necroptotic function. In Homo sapiens (Human), this protein is Mixed lineage kinase domain-like protein.